Reading from the N-terminus, the 190-residue chain is Crossover junction endodeoxyribonuclease RuvC (190 aa).

Residues aspartate 8, glutamate 67, and aspartate 139 contribute to the active site. Positions 8, 67, and 139 each coordinate Mg(2+).

This sequence belongs to the RuvC family. In terms of assembly, homodimer which binds Holliday junction (HJ) DNA. The HJ becomes 2-fold symmetrical on binding to RuvC with unstacked arms; it has a different conformation from HJ DNA in complex with RuvA. In the full resolvosome a probable DNA-RuvA(4)-RuvB(12)-RuvC(2) complex forms which resolves the HJ. Mg(2+) serves as cofactor.

The protein localises to the cytoplasm. The catalysed reaction is Endonucleolytic cleavage at a junction such as a reciprocal single-stranded crossover between two homologous DNA duplexes (Holliday junction).. In terms of biological role, the RuvA-RuvB-RuvC complex processes Holliday junction (HJ) DNA during genetic recombination and DNA repair. Endonuclease that resolves HJ intermediates. Cleaves cruciform DNA by making single-stranded nicks across the HJ at symmetrical positions within the homologous arms, yielding a 5'-phosphate and a 3'-hydroxyl group; requires a central core of homology in the junction. The consensus cleavage sequence is 5'-(A/T)TT(C/G)-3'. Cleavage occurs on the 3'-side of the TT dinucleotide at the point of strand exchange. HJ branch migration catalyzed by RuvA-RuvB allows RuvC to scan DNA until it finds its consensus sequence, where it cleaves and resolves the cruciform DNA. In Haemophilus influenzae (strain PittEE), this protein is Crossover junction endodeoxyribonuclease RuvC.